Consider the following 1003-residue polypeptide: Putative helicase MOV-10 (1003 aa).

At lysine 148 the chain carries N6-acetyllysine. Phosphothreonine occurs at positions 160 and 254. Serine 432 bears the Phosphoserine mark. Residue 524–531 (GPPGTGKT) coordinates ATP. The short motif at 645–648 (DEAG) is the DEAG box element. The interval 921-965 (NPLLLGHDPDWKVFLEFCKENGGYTGCPFPAKLDLQQGQNLLQGL) is interaction with AGO2 and APOBEC3G. Residues 968-1003 (LSPSTSGLKSHDYLPQEREGEEGLSLQVEPEWRNEL) are disordered. Phosphoserine occurs at positions 969 and 977. The segment covering 976-985 (KSHDYLPQER) has biased composition (basic and acidic residues).

The protein belongs to the DNA2/NAM7 helicase family. SDE3 subfamily. In terms of assembly, interacts with DICER1, AGO2, TARBP2, EIF6 and RPL7A (60S ribosome subunit); they form a large RNA-induced silencing complex (RISC). Interacts with APOBEC3G in an RNA-dependent manner. Interacts with TRIM71 (via NHL repeats) in an RNA-dependent manner. Interacts with both protein products of LIRE1, ORF1p and ORF2p. Interacts with TUT4 and, to a lesser extent, TUT7; the interactions are RNA-dependent. Interacts with AGO2, TNRC6B and UPF1; the interactions are direct and RNA-dependent. Interacts with FMR1; this interaction is direct, occurs in an RNA-dependent manner on polysomes and induces association of MOV10 with RNAs. Interacts with SHFL; the interaction increases in presence of RNA. Interacts with DHX34; the interaction is-RNA independent. Interacts with RBM46. Ubiquitinated by the DCX(DCAF12) complex that specifically recognizes the glutamate-leucine (Glu-Leu) degron at the C-terminus, leading to its degradation.

The protein localises to the cytoplasm. It localises to the P-body. It is found in the cytoplasmic ribonucleoprotein granule. Its subcellular location is the stress granule. The protein resides in the nucleus. The catalysed reaction is ATP + H2O = ADP + phosphate + H(+). In terms of biological role, 5' to 3' RNA helicase that is involved in a number of cellular roles ranging from mRNA metabolism and translation, modulation of viral infectivity, inhibition of retrotransposition, or regulation of synaptic transmission. Plays an important role in innate antiviral immunity by promoting type I interferon production. Mechanistically, specifically uses IKKepsilon/IKBKE as the mediator kinase for IRF3 activation. Contributes to UPF1 mRNA target degradation by translocation along 3' UTRs. Required for microRNA (miRNA)-mediated gene silencing by the RNA-induced silencing complex (RISC). Required for both miRNA-mediated translational repression and miRNA-mediated cleavage of complementary mRNAs by RISC. In cooperation with FMR1, regulates miRNA-mediated translational repression by AGO2. Restricts retrotransposition of long interspersed element-1 (LINE-1) in cooperation with TUT4 and TUT7 counteracting the RNA chaperonne activity of L1RE1. Facilitates LINE-1 uridylation by TUT4 and TUT7. Required for embryonic viability and for normal central nervous system development and function. Plays two critical roles in early brain development: suppresses retroelements in the nucleus by directly inhibiting cDNA synthesis, while regulates cytoskeletal mRNAs to influence neurite outgrowth in the cytosol. May function as a messenger ribonucleoprotein (mRNP) clearance factor. This is Putative helicase MOV-10 (MOV10) from Bos taurus (Bovine).